Reading from the N-terminus, the 346-residue chain is Phosphate acyltransferase (346 aa).

This sequence belongs to the PlsX family. Homodimer. Probably interacts with PlsY.

The protein localises to the cytoplasm. The catalysed reaction is a fatty acyl-[ACP] + phosphate = an acyl phosphate + holo-[ACP]. It functions in the pathway lipid metabolism; phospholipid metabolism. In terms of biological role, catalyzes the reversible formation of acyl-phosphate (acyl-PO(4)) from acyl-[acyl-carrier-protein] (acyl-ACP). This enzyme utilizes acyl-ACP as fatty acyl donor, but not acyl-CoA. The chain is Phosphate acyltransferase from Synechococcus elongatus (strain ATCC 33912 / PCC 7942 / FACHB-805) (Anacystis nidulans R2).